The primary structure comprises 325 residues: Intelectin-2 (325 aa).

The N-terminal stretch at 1 to 26 (MLSMLRTMTRLCFLLFFSVATSGCSA) is a signal peptide. The 224-residue stretch at 44 to 267 (FSFSSLPRSC…AANALCAGIK (224 aa)) folds into the Fibrinogen C-terminal domain. C53 and C82 form a disulfide bridge. Residues H98, E99, D101, G104, G109, D110, and D145 each coordinate Ca(2+). 3 cysteine pairs are disulfide-bonded: C106–C292, C211–C271, and C263–C277. Ca(2+) is bound by residues N272, E274, and D294. Residue 274–275 (EH) coordinates a carbohydrate.

In terms of tissue distribution, expressed only in the small intestine.

It is found in the secreted. In terms of biological role, may play a role in the defense system against pathogens. In Homo sapiens (Human), this protein is Intelectin-2 (ITLN2).